The sequence spans 266 residues: Putative carbamate hydrolase RutD (266 aa).

It belongs to the AB hydrolase superfamily. Hydrolase RutD family.

The catalysed reaction is carbamate + 2 H(+) = NH4(+) + CO2. In terms of biological role, involved in pyrimidine catabolism. May facilitate the hydrolysis of carbamate, a reaction that can also occur spontaneously. This is Putative carbamate hydrolase RutD from Escherichia coli O26:H11 (strain 11368 / EHEC).